A 142-amino-acid polypeptide reads, in one-letter code: Cystatin-8 (142 aa).

The first 19 residues, 1–19, serve as a signal peptide directing secretion; the sequence is MAKPLWLSLILFIIPVALA. Residue Asn39 is glycosylated (N-linked (GlcNAc...) asparagine). Positions 77 to 81 match the Secondary area of contact motif; that stretch reads QITDR. 2 disulfides stabilise this stretch: Cys95/Cys105 and Cys119/Cys139. Residue Asn100 is glycosylated (N-linked (GlcNAc...) asparagine).

This sequence belongs to the cystatin family. Proximal caput region of the epididymis. Lower expression in the testis. Within the testis it is localized to the elongating spermatids, whereas within the epididymis it is exclusively synthesized by the proximal caput epithelium.

It is found in the secreted. In terms of biological role, performs a specialized role during sperm development and maturation. This Mus musculus (Mouse) protein is Cystatin-8 (Cst8).